The primary structure comprises 503 residues: Cytosolic carboxypeptidase 6 (503 aa).

The 272-residue stretch at 167–438 (YPYTYTRFQH…NVARTFLDYY (272 aa)) folds into the Peptidase M14 domain. Residues His-230, Glu-233, and His-328 each contribute to the Zn(2+) site. Glu-401 functions as the Proton donor/acceptor in the catalytic mechanism. Basic and acidic residues-rich tracts occupy residues 459–469 (IEVQRRKEKSP) and 487–503 (KGDK…STPF). Residues 459–503 (IEVQRRKEKSPPYKHPLLRGPASNYPNSKGDKKSSVNHKDPSTPF) form a disordered region.

The protein belongs to the peptidase M14 family. As to quaternary structure, interacts with MYLK. Requires Zn(2+) as cofactor.

Its subcellular location is the cytoplasm. The protein resides in the cytosol. The protein localises to the cytoskeleton. It is found in the microtubule organizing center. It localises to the centrosome. Its subcellular location is the centriole. The protein resides in the golgi apparatus. The protein localises to the cilium basal body. The enzyme catalyses (L-glutamyl)(n+1)-gamma-L-glutamyl-L-glutamyl-[protein] + H2O = (L-glutamyl)(n)-gamma-L-glutamyl-L-glutamyl-[protein] + L-glutamate. It catalyses the reaction C-terminal L-alpha-aminoacyl-L-glutamyl-L-glutamyl-[tubulin] + H2O = C-terminal L-alpha-aminoacyl-L-glutamyl-[tubulin] + L-glutamate. In terms of biological role, metallocarboxypeptidase that mediates protein deglutamylation of tubulin and non-tubulin target proteins. Catalyzes the removal of polyglutamate side chains present on the gamma-carboxyl group of glutamate residues within the C-terminal tail of tubulin protein. Specifically cleaves tubulin long-side-chains, while it is not able to remove the branching point glutamate. Also catalyzes the removal of polyglutamate residues from the carboxy-terminus of non-tubulin proteins such as MYLK. Mediates the deglutamylation of nucleotidyltransferase CGAS, leading to CGAS antiviral defense response activation. Involved in KLF4 deglutamylation which promotes KLF4 proteasome-mediated degradation, thereby negatively regulating cell pluripotency maintenance and embryogenesis. This is Cytosolic carboxypeptidase 6 from Homo sapiens (Human).